Reading from the N-terminus, the 181-residue chain is Ribonuclease M5 (181 aa).

The Toprim domain maps to 5–88 (KEIIVVEGKD…IKHAYLNTKD (84 aa)). Positions 11, 57, and 59 each coordinate Mg(2+).

This sequence belongs to the ribonuclease M5 family. It depends on Mg(2+) as a cofactor.

It localises to the cytoplasm. The catalysed reaction is Endonucleolytic cleavage of RNA, removing 21 and 42 nucleotides, respectively, from the 5'- and 3'-termini of a 5S-rRNA precursor.. Functionally, required for correct processing of both the 5' and 3' ends of 5S rRNA precursor. Cleaves both sides of a double-stranded region yielding mature 5S rRNA in one step. The polypeptide is Ribonuclease M5 (Borreliella burgdorferi (strain ATCC 35210 / DSM 4680 / CIP 102532 / B31) (Borrelia burgdorferi)).